The primary structure comprises 253 residues: 2,3-bisphosphoglycerate-dependent phosphoglycerate mutase (253 aa).

Residues 12–19 (RHGESEWN), 25–26 (TG), R64, 91–94 (ERHY), K102, and 118–119 (RR) each bind substrate. Catalysis depends on H13, which acts as the Tele-phosphohistidine intermediate. Residue E91 is the Proton donor/acceptor of the active site. A disordered region spans residues 126 to 148 (PPLADGSEFSQSDDPRYASIPPE). A substrate-binding site is contributed by 187 to 188 (GN).

The protein belongs to the phosphoglycerate mutase family. BPG-dependent PGAM subfamily.

It catalyses the reaction (2R)-2-phosphoglycerate = (2R)-3-phosphoglycerate. The protein operates within carbohydrate degradation; glycolysis; pyruvate from D-glyceraldehyde 3-phosphate: step 3/5. Its function is as follows. Catalyzes the interconversion of 2-phosphoglycerate and 3-phosphoglycerate. The chain is 2,3-bisphosphoglycerate-dependent phosphoglycerate mutase from Streptomyces avermitilis (strain ATCC 31267 / DSM 46492 / JCM 5070 / NBRC 14893 / NCIMB 12804 / NRRL 8165 / MA-4680).